We begin with the raw amino-acid sequence, 397 residues long: DNA replication and repair protein RecF (397 aa).

An ATP-binding site is contributed by 30–37; it reads GPNGQGKT.

It belongs to the RecF family.

The protein localises to the cytoplasm. Its function is as follows. The RecF protein is involved in DNA metabolism; it is required for DNA replication and normal SOS inducibility. RecF binds preferentially to single-stranded, linear DNA. It also seems to bind ATP. In Beutenbergia cavernae (strain ATCC BAA-8 / DSM 12333 / CCUG 43141 / JCM 11478 / NBRC 16432 / NCIMB 13614 / HKI 0122), this protein is DNA replication and repair protein RecF.